A 42-amino-acid polypeptide reads, in one-letter code: Perlinhibin-related protein (42 aa).

Post-translationally, contains four disulfide bonds.

Inhibitor of shell growth. This is Perlinhibin-related protein from Haliotis laevigata (Smooth Australian abalone).